The primary structure comprises 2167 residues: Beige protein homolog 1 (2167 aa).

In terms of domain architecture, BEACH-type PH spans 1368–1499 (KDNDSIATIW…VRDDVLRVLN (132 aa)). In terms of domain architecture, BEACH spans 1545-1839 (SANNSLIDGF…QIFQEPHPEK (295 aa)). Lys1667 participates in a covalent cross-link: Glycyl lysine isopeptide (Lys-Gly) (interchain with G-Cter in ubiquitin). WD repeat units follow at residues 1927–1965 (THMA…HSVS), 1976–2015 (GHLC…LVRQ), 2017–2054 (TNDA…YTSK), 2072–2111 (KLDA…HNEW), and 2129–2167 (SIKG…AIWY).

The protein localises to the cytoplasm. It localises to the membrane. In terms of biological role, may be involved in protein sorting and cell wall formation. This is Beige protein homolog 1 (BPH1) from Saccharomyces cerevisiae (strain ATCC 204508 / S288c) (Baker's yeast).